A 299-amino-acid polypeptide reads, in one-letter code: MGAPKQRWTPEEEAALKAGVAKHGPGKWRTILRDSDFSALLRLRSNVDLKDKWRNLSVTAGGYGSREKARMALKKGRRVVPKLTAEPMDVDVKDMDDAHDTAIDVEPLAMAFESLPTEESPDKSVARLDDLILEAIRKLKEPSGPSKAAIAAYIEDQYWPPADFQRLLSTKLKALVNSGKLIKVNQKYRIAPSPPPSGRIGTKVSSAEGMKAENNNAKRLTKHQVIAELEKMKGMTKEEAAAFAAKAVAEAEVAIAEAEEAARVAEAAENDAEAAKAFLDAVTLSMRNRNAASMMLRAC.

An HTH myb-type domain is found at 1–61 (MGAPKQRWTP…KWRNLSVTAG (61 aa)). The segment at residues 28–57 (WRTILRDSDFSALLRLRSNVDLKDKWRNLS) is a DNA-binding region (H-T-H motif). Residues 124–192 (SVARLDDLIL…KVNQKYRIAP (69 aa)) enclose the H15 domain. A coiled-coil region spans residues 238–279 (EEAAAFAAKAVAEAEVAIAEAEEAARVAEAAENDAEAAKAFL).

The protein belongs to the histone H1/H5 family. SMH subfamily. As to quaternary structure, forms a homodimer and heterodimers. Expressed in leaves.

The protein resides in the nucleus. It localises to the chromosome. It is found in the nucleolus. Its subcellular location is the telomere. In terms of biological role, binds preferentially double-stranded telomeric repeats 5'-TTTAGGG-3', but can also bind to the single G-rich and C-rich telomeric strand. This is Single myb histone 1 (SMH1) from Zea mays (Maize).